The sequence spans 122 residues: Insulin-like growth factor 1 (122 aa).

The segment at 49–77 is b; it reads GPETLCGAELVDALQFVCGDRGFYFNKPT. Intrachain disulfides connect cysteine 54–cysteine 96, cysteine 66–cysteine 109, and cysteine 95–cysteine 100. Residues 78 to 89 form a c region; sequence GYGSSSRRAPQT. The segment at 90–110 is a; it reads GIVDECCFRSCDLRRLEMYCA. The segment at 111–118 is d; the sequence is PLKPAKSA. The propeptide at 119–122 is e peptide; that stretch reads RSVR.

It belongs to the insulin family. As to quaternary structure, forms a ternary complex with IGFR1 and ITGAV:ITGB3. Forms a ternary complex with IGFR1 and ITGA6:ITGB4. Forms a ternary complex with IGFBP3 and ALS.

The protein localises to the secreted. Its function is as follows. The insulin-like growth factors, isolated from plasma, are structurally and functionally related to insulin but have a much higher growth-promoting activity. May be a physiological regulator of [1-14C]-2-deoxy-D-glucose (2DG) transport and glycogen synthesis in osteoblasts. Stimulates glucose transport in bone-derived osteoblastic (PyMS) cells and is effective at much lower concentrations than insulin, not only regarding glycogen and DNA synthesis but also with regard to enhancing glucose uptake. May play a role in synapse maturation. Ca(2+)-dependent exocytosis of IGF1 is required for sensory perception of smell in the olfactory bulb. Acts as a ligand for IGF1R. Binds to the alpha subunit of IGF1R, leading to the activation of the intrinsic tyrosine kinase activity which autophosphorylates tyrosine residues in the beta subunit thus initiating a cascade of down-stream signaling events leading to activation of the PI3K-AKT/PKB and the Ras-MAPK pathways. Binds to integrins ITGAV:ITGB3 and ITGA6:ITGB4. Its binding to integrins and subsequent ternary complex formation with integrins and IGFR1 are essential for IGF1 signaling. Induces the phosphorylation and activation of IGFR1, MAPK3/ERK1, MAPK1/ERK2 and AKT1. As part of the MAPK/ERK signaling pathway, acts as a negative regulator of apoptosis in cardiomyocytes via promotion of STUB1/CHIP-mediated ubiquitination and degradation of ICER-type isoforms of CREM. The protein is Insulin-like growth factor 1 of Equus caballus (Horse).